The sequence spans 61 residues: MAKKSMIVRNARQPKYAVRHHNRCKLCGRPHAYIRKFGICRICFRELAYKGELPGVKKASW.

4 residues coordinate Zn(2+): cysteine 24, cysteine 27, cysteine 40, and cysteine 43.

This sequence belongs to the universal ribosomal protein uS14 family. Zinc-binding uS14 subfamily. As to quaternary structure, part of the 30S ribosomal subunit. Contacts proteins S3 and S10. Zn(2+) serves as cofactor.

Functionally, binds 16S rRNA, required for the assembly of 30S particles and may also be responsible for determining the conformation of the 16S rRNA at the A site. The protein is Small ribosomal subunit protein uS14 of Desulfitobacterium hafniense (strain Y51).